The following is a 518-amino-acid chain: Bifunctional purine biosynthesis protein PurH (518 aa).

In terms of domain architecture, MGS-like spans Met-1–Cys-144.

It belongs to the PurH family.

The catalysed reaction is (6R)-10-formyltetrahydrofolate + 5-amino-1-(5-phospho-beta-D-ribosyl)imidazole-4-carboxamide = 5-formamido-1-(5-phospho-D-ribosyl)imidazole-4-carboxamide + (6S)-5,6,7,8-tetrahydrofolate. It carries out the reaction IMP + H2O = 5-formamido-1-(5-phospho-D-ribosyl)imidazole-4-carboxamide. Its pathway is purine metabolism; IMP biosynthesis via de novo pathway; 5-formamido-1-(5-phospho-D-ribosyl)imidazole-4-carboxamide from 5-amino-1-(5-phospho-D-ribosyl)imidazole-4-carboxamide (10-formyl THF route): step 1/1. It participates in purine metabolism; IMP biosynthesis via de novo pathway; IMP from 5-formamido-1-(5-phospho-D-ribosyl)imidazole-4-carboxamide: step 1/1. In Lactococcus lactis subsp. lactis (strain IL1403) (Streptococcus lactis), this protein is Bifunctional purine biosynthesis protein PurH.